Consider the following 344-residue polypeptide: Melanocyte-stimulating hormone receptor (344 aa).

The Extracellular segment spans residues 1-37 (MPMQGAQRKLLGSLNSTPTATSNLGLAANHTGAPCLE). N-linked (GlcNAc...) asparagine glycosylation occurs at Asn-29. Residues 38-63 (VSIPDGLFLSLGLVSLVENVLVVAAI) form a helical membrane-spanning segment. The Cytoplasmic portion of the chain corresponds to 64–72 (AKNRNLHSS). The chain crosses the membrane as a helical span at residues 73–93 (MYCFICCLALSDLLVSGSNML). The Extracellular portion of the chain corresponds to 94–118 (ETAIILLLEAGTLATRASVVQQLHN). A helical transmembrane segment spans residues 119-140 (TIDVLTCSSMLCSLCFLGAIAV). At 141–163 (DRYISIFYALRYHSIMTLPRAQR) the chain is on the cytoplasmic side. The chain crosses the membrane as a helical span at residues 164-183 (AIAAIWVTSVLSSTLFITYY). Residues 184–191 (DHAAVLLC) are Extracellular-facing. Residues 192–211 (LVVFFLAMLVLMAVLYVHML) traverse the membrane as a helical segment. Over 212–240 (ARACQHAQGIIRLHNRQLPAHKGFGLRGA) the chain is Cytoplasmic. Residues 241 to 266 (ATLTILLGIFFLCWGPFFLHLTLVVF) traverse the membrane as a helical segment. Residues 267–279 (CPQHLTCNCIFKN) lie on the Extracellular side of the membrane. The chain crosses the membrane as a helical span at residues 280–300 (FKVFLTLIICNTIIDPLIYAF). Residues 301–344 (RSQELRRTLKEVLLCSWWPGCGAEGGGDSVWPGSCVTLRGPLPP) lie on the Cytoplasmic side of the membrane. Cys-315 carries S-palmitoyl cysteine lipidation.

It belongs to the G-protein coupled receptor 1 family. As to quaternary structure, interacts with MGRN1, but does not undergo MGRN1-mediated ubiquitination; this interaction competes with GNAS-binding and thus inhibits agonist-induced cAMP production. Interacts with OPN3; the interaction results in a decrease in MC1R-mediated cAMP signaling and ultimately a decrease in melanin production in melanocytes.

It is found in the cell membrane. Functionally, receptor for MSH (alpha, beta and gamma) and ACTH. The activity of this receptor is mediated by G proteins which activate adenylate cyclase. Mediates melanogenesis, the production of eumelanin (black/brown) and phaeomelanin (red/yellow), via regulation of cAMP signaling in melanocytes. This Mico argentatus (Silvery marmoset) protein is Melanocyte-stimulating hormone receptor (MC1R).